Consider the following 391-residue polypeptide: Somatostatin receptor type 1 (391 aa).

Low complexity predominate over residues 1-11 (MFPNGTASSPS). The disordered stretch occupies residues 1–49 (MFPNGTASSPSSPSPSPGSCGEGGGSRGPGAGAADGMEEPGRNASQNGT). Residues 1–55 (MFPNGTASSPSSPSPSPGSCGEGGGSRGPGAGAADGMEEPGRNASQNGTLSEGQG) are Extracellular-facing. A glycan (N-linked (GlcNAc...) asparagine) is linked at N4. Residues 20-33 (CGEGGGSRGPGAGA) are compositionally biased toward gly residues. N43 and N47 each carry an N-linked (GlcNAc...) asparagine glycan. A helical transmembrane segment spans residues 56–83 (SAILISFIYSVVCLVGLCGNSMVIYVIL). At 84–93 (RYAKMKTATN) the chain is on the cytoplasmic side. The helical transmembrane segment at 94 to 119 (IYILNLAIADELLMLSVPFLVTSTLL) threads the bilayer. Topologically, residues 120–130 (RHWPFGALLCR) are extracellular. C129 and C207 are oxidised to a cystine. A helical membrane pass occupies residues 131-152 (LVLSVDAVNMFTSIYCLTVLSV). Topologically, residues 153 to 174 (DRYVAVVHPIKAARYRRPTVAK) are cytoplasmic. Residues 175 to 195 (VVNLGVWVLSLLVILPIVVFS) form a helical membrane-spanning segment. At 196 to 218 (RTAANSDGTVACNMLMPEPAQRW) the chain is on the extracellular side. A helical transmembrane segment spans residues 219–243 (LVGFVLYTFLMGFLLPVGAICLCYV). Over 244 to 269 (LIIAKMRMVALKAGWQQRKRSERKIT) the chain is Cytoplasmic. The helical transmembrane segment at 270-295 (LMVMMVVMVFVICWMPFYVVQLVNVF) threads the bilayer. The Extracellular segment spans residues 296–302 (AEQDDAT). The helical transmembrane segment at 303–326 (VSQLSVILGYANSCANPILYGFLS) threads the bilayer. The Cytoplasmic segment spans residues 327-391 (DNFKRSFQRI…GTCTSRITTL (65 aa)). Residue C338 is the site of S-palmitoyl cysteine attachment.

This sequence belongs to the G-protein coupled receptor 1 family. In terms of assembly, interacts with SKB1.

Its subcellular location is the cell membrane. Its function is as follows. Receptor for somatostatin with higher affinity for somatostatin-14 than -28. This receptor is coupled via pertussis toxin sensitive G proteins to inhibition of adenylyl cyclase. In addition it stimulates phosphotyrosine phosphatase and Na(+)/H(+) exchanger via pertussis toxin insensitive G proteins. This is Somatostatin receptor type 1 (SSTR1) from Canis lupus familiaris (Dog).